The chain runs to 129 residues: Small ribosomal subunit protein uS11 (129 aa).

This sequence belongs to the universal ribosomal protein uS11 family. Part of the 30S ribosomal subunit. Interacts with proteins S7 and S18. Binds to IF-3.

In terms of biological role, located on the platform of the 30S subunit, it bridges several disparate RNA helices of the 16S rRNA. Forms part of the Shine-Dalgarno cleft in the 70S ribosome. This Bacillus mycoides (strain KBAB4) (Bacillus weihenstephanensis) protein is Small ribosomal subunit protein uS11.